Reading from the N-terminus, the 151-residue chain is Chromophore lyase CpcS/CpeS homolog (151 aa).

Belongs to the CpcS/CpeS biliprotein lyase family.

It is found in the plastid. Its subcellular location is the chloroplast. Functionally, might function to covalently attach a chromophore to Cys residue(s) of phycobiliproteins. The chain is Chromophore lyase CpcS/CpeS homolog from Gracilaria tenuistipitata var. liui (Red alga).